The primary structure comprises 198 residues: N-acetyltransferase 9-like protein (198 aa).

The N-acetyltransferase domain maps to 14–186 (IILVPYKEKH…SNNFTNLTAD (173 aa)).

This sequence belongs to the acetyltransferase family. GNAT subfamily.

The polypeptide is N-acetyltransferase 9-like protein (nat9) (Nematostella vectensis (Starlet sea anemone)).